The sequence spans 242 residues: NAD-dependent protein deacetylase (242 aa).

A Deacetylase sirtuin-type domain is found at 1–242; sequence MQQFEEVRTI…EFVEGLSSIK (242 aa). Positions 23, 27, 34, 35, 102, 104, 105, and 120 each coordinate NAD(+). Phe34 lines the nicotinamide pocket. The nicotinamide site is built by Ile104 and Asp105. His120 (proton acceptor) is an active-site residue. 4 residues coordinate Zn(2+): Cys128, Cys131, Cys148, and Cys151. NAD(+) is bound by residues Thr187, Ser188, Asn213, and Ile231.

This sequence belongs to the sirtuin family. Class U subfamily. Zn(2+) is required as a cofactor.

Its subcellular location is the cytoplasm. The catalysed reaction is N(6)-acetyl-L-lysyl-[protein] + NAD(+) + H2O = 2''-O-acetyl-ADP-D-ribose + nicotinamide + L-lysyl-[protein]. Its function is as follows. NAD-dependent protein deacetylase which modulates the activities of several enzymes which are inactive in their acetylated form. This chain is NAD-dependent protein deacetylase, found in Bacillus anthracis.